The chain runs to 172 residues: Neuropeptide-like protein nlp-8 (172 aa).

The N-terminal stretch at 1-26 is a signal peptide; the sequence is MSQKLLPISPLQLLFLQCLLIGFTAA.

May be processed by convertase egl-3.

It is found in the secreted. Neuropeptide-like protein. Plays a role in behaviors associated with a sleep-like state induced by stress (SIS), acting in concert with the FARP (FMRFamide related) peptides, flp-13 and flp-24. The polypeptide is Neuropeptide-like protein nlp-8 (Caenorhabditis elegans).